The primary structure comprises 176 residues: MTTIVSVRRNGQVVIGGDGQATLGNTVMKGNVKKVRRLYNDKVIAGFAGGTADAFTLFELFERKLEMHQGHLVKAAVELAKDWRTDRMLRKLEALLAVADENASLIITGNGDVIQPENDLIAIGSGGPYAQAAARALLENTDIGARDIVEKALGIAGDICIYTNHNLTIEELSSKA.

Thr-2 is an active-site residue. The Na(+) site is built by Gly-157, Cys-160, and Thr-163.

Belongs to the peptidase T1B family. HslV subfamily. A double ring-shaped homohexamer of HslV is capped on each side by a ring-shaped HslU homohexamer. The assembly of the HslU/HslV complex is dependent on binding of ATP.

The protein localises to the cytoplasm. It carries out the reaction ATP-dependent cleavage of peptide bonds with broad specificity.. Allosterically activated by HslU binding. In terms of biological role, protease subunit of a proteasome-like degradation complex believed to be a general protein degrading machinery. The protein is ATP-dependent protease subunit HslV of Erwinia tasmaniensis (strain DSM 17950 / CFBP 7177 / CIP 109463 / NCPPB 4357 / Et1/99).